A 212-amino-acid chain; its full sequence is Ribosomal RNA large subunit methyltransferase E (212 aa).

Glycine 57, tryptophan 59, aspartate 77, aspartate 93, and aspartate 122 together coordinate S-adenosyl-L-methionine. The active-site Proton acceptor is the lysine 162.

The protein belongs to the class I-like SAM-binding methyltransferase superfamily. RNA methyltransferase RlmE family.

The protein resides in the cytoplasm. The enzyme catalyses uridine(2552) in 23S rRNA + S-adenosyl-L-methionine = 2'-O-methyluridine(2552) in 23S rRNA + S-adenosyl-L-homocysteine + H(+). Its function is as follows. Specifically methylates the uridine in position 2552 of 23S rRNA at the 2'-O position of the ribose in the fully assembled 50S ribosomal subunit. The chain is Ribosomal RNA large subunit methyltransferase E from Coxiella burnetii (strain RSA 331 / Henzerling II).